Here is a 520-residue protein sequence, read N- to C-terminus: Probable helicase MJECL08 (520 aa).

Residues Arg-162, 171-176 (GAGKSN), and 501-502 (KI) each bind ATP.

Belongs to the HerA family.

It catalyses the reaction Couples ATP hydrolysis with the unwinding of duplex DNA at the replication fork by translocating in the 5'-3' direction. This creates two antiparallel DNA single strands (ssDNA). The leading ssDNA polymer is the template for DNA polymerase III holoenzyme which synthesizes a continuous strand.. The enzyme catalyses ATP + H2O = ADP + phosphate + H(+). The catalysed reaction is Couples ATP hydrolysis with the unwinding of duplex DNA by translocating in the 3'-5' direction.. In terms of biological role, a probably bidirectional DNA helicase. The polypeptide is Probable helicase MJECL08 (Methanocaldococcus jannaschii (strain ATCC 43067 / DSM 2661 / JAL-1 / JCM 10045 / NBRC 100440) (Methanococcus jannaschii)).